A 365-amino-acid polypeptide reads, in one-letter code: tRNA/tmRNA (uracil-C(5))-methyltransferase (365 aa).

The S-adenosyl-L-methionine site is built by glutamine 188, tyrosine 216, asparagine 221, glutamate 237, and aspartate 297. Cysteine 322 (nucleophile) is an active-site residue. The active-site Proton acceptor is glutamate 356.

This sequence belongs to the class I-like SAM-binding methyltransferase superfamily. RNA M5U methyltransferase family. TrmA subfamily.

It catalyses the reaction uridine(54) in tRNA + S-adenosyl-L-methionine = 5-methyluridine(54) in tRNA + S-adenosyl-L-homocysteine + H(+). It carries out the reaction uridine(341) in tmRNA + S-adenosyl-L-methionine = 5-methyluridine(341) in tmRNA + S-adenosyl-L-homocysteine + H(+). Its function is as follows. Dual-specificity methyltransferase that catalyzes the formation of 5-methyluridine at position 54 (m5U54) in all tRNAs, and that of position 341 (m5U341) in tmRNA (transfer-mRNA). In Aggregatibacter aphrophilus (strain NJ8700) (Haemophilus aphrophilus), this protein is tRNA/tmRNA (uracil-C(5))-methyltransferase.